The following is a 428-amino-acid chain: Enolase (428 aa).

Gln162 serves as a coordination point for (2R)-2-phosphoglycerate. Glu204 (proton donor) is an active-site residue. Residues Asp241, Glu283, and Asp310 each contribute to the Mg(2+) site. Residues Lys335, Arg364, Ser365, and Lys386 each coordinate (2R)-2-phosphoglycerate. Lys335 functions as the Proton acceptor in the catalytic mechanism.

It belongs to the enolase family. Mg(2+) is required as a cofactor.

It is found in the cytoplasm. The protein localises to the secreted. It localises to the cell surface. The enzyme catalyses (2R)-2-phosphoglycerate = phosphoenolpyruvate + H2O. The protein operates within carbohydrate degradation; glycolysis; pyruvate from D-glyceraldehyde 3-phosphate: step 4/5. In terms of biological role, catalyzes the reversible conversion of 2-phosphoglycerate (2-PG) into phosphoenolpyruvate (PEP). It is essential for the degradation of carbohydrates via glycolysis. This chain is Enolase, found in Rhodococcus opacus (strain B4).